Here is a 238-residue protein sequence, read N- to C-terminus: Proteasome subunit beta type-6 (238 aa).

At Ala2 the chain carries N-acetylalanine. A propeptide spans 2–33 (AAALAVRGAVSAPAFGPEALTPDWENREVSTG) (removed in mature form). The Nucleophile role is filled by Thr34. Thr68 carries the post-translational modification Phosphothreonine.

It belongs to the peptidase T1B family. The 26S proteasome consists of a 20S proteasome core and two 19S regulatory subunits. The 20S proteasome core is a barrel-shaped complex made of 28 subunits that are arranged in four stacked rings. The two outer rings are each formed by seven alpha subunits, and the two inner rings are formed by seven beta subunits. The proteolytic activity is exerted by three beta-subunits PSMB5, PSMB6 and PSMB7.

Its subcellular location is the cytoplasm. It is found in the nucleus. The enzyme catalyses Cleavage of peptide bonds with very broad specificity.. Component of the 20S core proteasome complex involved in the proteolytic degradation of most intracellular proteins. This complex plays numerous essential roles within the cell by associating with different regulatory particles. Associated with two 19S regulatory particles, forms the 26S proteasome and thus participates in the ATP-dependent degradation of ubiquitinated proteins. The 26S proteasome plays a key role in the maintenance of protein homeostasis by removing misfolded or damaged proteins that could impair cellular functions, and by removing proteins whose functions are no longer required. Associated with the PA200 or PA28, the 20S proteasome mediates ubiquitin-independent protein degradation. This type of proteolysis is required in several pathways including spermatogenesis (20S-PA200 complex) or generation of a subset of MHC class I-presented antigenic peptides (20S-PA28 complex). Within the 20S core complex, PSMB6 displays a peptidylglutamyl-hydrolyzing activity also termed postacidic or caspase-like activity, meaning that the peptides bond hydrolysis occurs directly after acidic residues. This Rattus norvegicus (Rat) protein is Proteasome subunit beta type-6 (Psmb6).